The following is a 532-amino-acid chain: IQ domain-containing protein IQM4 (532 aa).

Disordered stretches follow at residues 47–67 (SRTNSFKSENPQEKSPKTGME) and 85–104 (PMNKEDEEIVEPTKPARNSL). A compositionally biased stretch (basic and acidic residues) spans 56-66 (NPQEKSPKTGM). Acidic residues predominate over residues 85-94 (PMNKEDEEIV). Residues 136–165 (LDAAATTLQKVYKSYRTRRNLADCAVVVEE) enclose the IQ domain. 2 disordered regions span residues 410-443 (SSGYEEEATKEEEAEKKPAETIVTEEQEEEKERE) and 487-513 (PRISPGSTRFPSPYGPIPSPRPSPRVR). Positions 487 to 496 (PRISPGSTRF) are enriched in polar residues. Over residues 499–509 (PYGPIPSPRPS) the composition is skewed to pro residues.

In terms of tissue distribution, expressed in roots, cauline leaves and flowers, and at lower levels in rosette leaves, stems and siliques.

It is found in the cytoplasm. It localises to the nucleus. Functionally, may be involved in biotic and abiotic stress responses. In Arabidopsis thaliana (Mouse-ear cress), this protein is IQ domain-containing protein IQM4.